We begin with the raw amino-acid sequence, 305 residues long: CRISPR-associated endonuclease Cas1 (305 aa).

The tract at residues 96 to 278 (SDKLLYQAKL…EDVLAAGEIQ (183 aa)) is sufficient for cleavage of ssRNA, ssDNA and Holliday junction DNA. Glu141, His208, and Asp221 together coordinate Mg(2+). Residues 278-305 (QPPAPPEDAQPVAIPLPVSLGDAGHRSS) form a disordered region.

Belongs to the CRISPR-associated endonuclease Cas1 family. Homodimer. Part of the Cas1-Cas2 complex. Interacts with RecB, RecC, RuvB, CasC and CasE. Forms a hexamer with 2 Cas1 dimers sandwiching a Cas2 dimer. The DNA lies across a flat surface extending from 1 Cas1 dimer, across the Cas2 dimer and contacting the other Cas1 dimer. Only 1 Cas1 protein from each dimer is catalytic, the other interacts with the Cas2 dimer and possibly target DNA. It depends on Mg(2+) as a cofactor.

It is found in the cytoplasm. Its activity is regulated as follows. Nuclease activity partially inhibited by CasE. In terms of biological role, CRISPR (clustered regularly interspaced short palindromic repeat), is an adaptive immune system that provides protection against mobile genetic elements (viruses, transposable elements and conjugative plasmids). CRISPR clusters contain sequences complementary to antecedent mobile elements and target invading nucleic acids. CRISPR clusters are transcribed and processed into CRISPR RNA (crRNA). The Cas1-Cas2 complex is involved in CRISPR adaptation, the first stage of CRISPR immunity, being required for the addition/removal of CRISPR spacers at the leader end of the CRISPR locus. The Cas1-Cas2 complex introduces staggered nicks into both strands of the CRISPR array near the leader repeat and joins the 5'-ends of the repeat strands with the 3'-ends of the new spacer sequence. Spacer DNA integration requires supercoiled target DNA and 3'-OH ends on the inserted (spacer) DNA and probably initiates with a nucleophilic attack of the C 3'-OH end of the protospacer on the minus strand of the first repeat sequence. Expression of Cas1-Cas2 in a strain lacking both genes permits spacer acquisition. Non-specifically binds DNA; the Cas1-Cas2 complex preferentially binds CRISPR-locus DNA. Highest binding is seen to a dual forked DNA complex with 3'-overhangs and a protospacer-adjacent motif-complement specifically positioned. The protospacer DNA lies across a flat surface extending from 1 Cas1 dimer, across the Cas2 dimer and contacting the other Cas1 dimer; the 23 bp-long ds section of the DNA is bracketed by 1 Tyr-22 from each of the Cas1 dimers. Cas1 cuts within the 3'-overhang, to generate a 33-nucleotide DNA that is probably incorporated into the CRISPR leader by a cut-and-paste mechanism. Cas1 alone endonucleolytically cleaves linear ssRNA, ssDNA and short (34 base) dsDNA as well as branched DNA substrates such as Holliday junctions, replication forks and 5'-flap DNA substrates. In vitro catalyzes a concerted transesterification reaction on branched DNA, as would be expected during integration of protospacers into the CRISPR leader sequence; Cas2 is not required in vitro. This reaction requires a 3'-OH group at the branch point. Genetic interactions suggest Cas1 interacts with components of the RecBC and RuvB DNA repair systems. This Escherichia coli (strain K12) protein is CRISPR-associated endonuclease Cas1 (ygbT).